The following is a 345-amino-acid chain: L-threonine 3-dehydrogenase (345 aa).

Residue cysteine 39 participates in Zn(2+) binding. Catalysis depends on charge relay system residues threonine 41 and histidine 44. Histidine 64, glutamate 65, cysteine 94, cysteine 97, cysteine 100, and cysteine 108 together coordinate Zn(2+). Residues isoleucine 176, aspartate 196, arginine 201, 263-265, and 287-288 each bind NAD(+); these read LGI and VY.

The protein belongs to the zinc-containing alcohol dehydrogenase family. As to quaternary structure, homotetramer. Zn(2+) is required as a cofactor.

It is found in the cytoplasm. It carries out the reaction L-threonine + NAD(+) = (2S)-2-amino-3-oxobutanoate + NADH + H(+). It participates in amino-acid degradation; L-threonine degradation via oxydo-reductase pathway; glycine from L-threonine: step 1/2. Functionally, catalyzes the NAD(+)-dependent oxidation of L-threonine to 2-amino-3-ketobutyrate. In Anaeromyxobacter dehalogenans (strain 2CP-C), this protein is L-threonine 3-dehydrogenase.